The sequence spans 622 residues: Cilia- and flagella-associated protein 206 (622 aa).

The protein belongs to the CFAP206 family.

It is found in the cytoplasm. The protein localises to the cytoskeleton. The protein resides in the cilium axoneme. Its subcellular location is the cilium basal body. In terms of biological role, essential for sperm motility and is involved in the regulation of the beating frequency of motile cilia on the epithelial cells of the respiratory tract. Required for the establishment of radial spokes in sperm flagella. The polypeptide is Cilia- and flagella-associated protein 206 (Rattus norvegicus (Rat)).